Here is a 301-residue protein sequence, read N- to C-terminus: Ribosomal RNA large subunit methyltransferase F (301 aa).

Belongs to the methyltransferase superfamily. METTL16/RlmF family.

It is found in the cytoplasm. It carries out the reaction adenosine(1618) in 23S rRNA + S-adenosyl-L-methionine = N(6)-methyladenosine(1618) in 23S rRNA + S-adenosyl-L-homocysteine + H(+). Specifically methylates the adenine in position 1618 of 23S rRNA. In Colwellia psychrerythraea (strain 34H / ATCC BAA-681) (Vibrio psychroerythus), this protein is Ribosomal RNA large subunit methyltransferase F.